The sequence spans 118 residues: MSRSSKKSPFISYRLFNTIDKMNLKNLKQLVFTKSRSSTVFPSMVGHNISVYNGKNYVPFLILNQMISSKLGEFSRTRNFRGHKGINKKLIKKSSKKVTKNKKSIKKNIKTTSKKFKK.

The disordered stretch occupies residues 92-118 (KKSSKKVTKNKKSIKKNIKTTSKKFKK).

The protein belongs to the universal ribosomal protein uS19 family.

The protein localises to the plastid. Functionally, protein S19 forms a complex with S13 that binds strongly to the 16S ribosomal RNA. The chain is Small ribosomal subunit protein uS19c (rps19) from Euglena longa (Euglenophycean alga).